We begin with the raw amino-acid sequence, 307 residues long: NmrA-like family domain-containing oxidoreductase flvB (307 aa).

Residues 4–9, 32–36, 53–54, 74–76, and 148–151 each bind NADP(+); these read LITGAT, SSSSP, DY, STN, and YVEG.

The protein belongs to the NmrA-type oxidoreductase family.

The catalysed reaction is (2S)-5,5-dimethyl-2,3,4,5-tetrahydropyridine-2,6-dicarboxylate + NADPH + 2 H(+) = (6S)-3,3-dimethylpiperidine-2,6-dicarboxylate + NADP(+). It catalyses the reaction (2S)-5,5-dimethyl-2,3,4,5-tetrahydropyridine-2,6-dicarboxylate + NADH + 2 H(+) = (6S)-3,3-dimethylpiperidine-2,6-dicarboxylate + NAD(+). The protein operates within secondary metabolite biosynthesis; terpenoid biosynthesis. Its function is as follows. NmrA-like family domain-containing oxidoreductase; part of the gene cluster that mediates the biosynthesis of flavunoidine, an alkaloidal terpenoid with a tetracyclic cage-like core connected to dimethylcadaverine via a C-N bond and acylated with 5,5-dimethyl-L-pipecolate. The tetracyclic core is synthesized by the terpene cyclase flvE and the cytochrome P450 monooxygenase flvD. The terpene cyclase flvE catalyzes the cyclization of farnesyl pyrophosphate (FPP) to form (1R,4R,5S)-(+)-acoradiene and the cytochrome P450 monooxygenase flvD is then responsible for oxidative conversion of (1R,4R,5S)-(+)-acoradiene into the tetracyclic cage present in the final product flavunoidine. In parallel, the N-methyltransferase flvH dimethylates L-lysine to give N,N-dimethyl-L-Lysin which is decarboxylated by flvG to afford dimethylcadaverine. The terpene cyclase-like protein flvF is the enzyme that attaches the dimethylcadaverine precusor at the C-7 of the tetracyclic cage to yield pre-flavunoidine. The cytochrome monooxygenase flvC hydroxylates the C-10 position of pre-flavunoidine whereas the NRPS flvI acylates the terpenoid core at the hydroxylated C-10 with dimethylpipecolate to yield final flavunoidine. The bifunctional enzyme flvA and the dehydrogenase flvB are responsible for the synthesis of the dimethylpipecolate precursor. The PLP-dependent lyase domain of flvA might use L-O-acetyl-homoserine and alpha-keto-isovalerate to form an intermediary ketone that can cyclize intramolecularly to yield an imine. The imine can be reduced by flvB to yield the 6-carboxylated pipecolate. The C-terminal alpha-KG-dependent oxygenase domain of flvA is then proposed to catalyze the decarboxylation to yield dimethylpipecolate. The chain is NmrA-like family domain-containing oxidoreductase flvB from Aspergillus flavus (strain ATCC 200026 / FGSC A1120 / IAM 13836 / NRRL 3357 / JCM 12722 / SRRC 167).